Here is a 431-residue protein sequence, read N- to C-terminus: Tryptophan synthase beta chain (431 aa).

The residue at position 109 (Lys-109) is an N6-(pyridoxal phosphate)lysine.

Belongs to the TrpB family. In terms of assembly, tetramer of two alpha and two beta chains. Requires pyridoxal 5'-phosphate as cofactor.

It catalyses the reaction (1S,2R)-1-C-(indol-3-yl)glycerol 3-phosphate + L-serine = D-glyceraldehyde 3-phosphate + L-tryptophan + H2O. Its pathway is amino-acid biosynthesis; L-tryptophan biosynthesis; L-tryptophan from chorismate: step 5/5. The beta subunit is responsible for the synthesis of L-tryptophan from indole and L-serine. The sequence is that of Tryptophan synthase beta chain from Deinococcus radiodurans (strain ATCC 13939 / DSM 20539 / JCM 16871 / CCUG 27074 / LMG 4051 / NBRC 15346 / NCIMB 9279 / VKM B-1422 / R1).